The following is a 118-amino-acid chain: Basic phospholipase A2 1 (118 aa).

7 disulfide bridges follow: C11-C72, C26-C117, C28-C44, C43-C98, C50-C91, C60-C84, and C78-C89. Ca(2+) is bound by residues Y27, G29, and G31. H47 is a catalytic residue. Position 48 (D48) interacts with Ca(2+). D92 is a catalytic residue.

It belongs to the phospholipase A2 family. Group I subfamily. D49 sub-subfamily. Requires Ca(2+) as cofactor. As to expression, expressed by the venom gland.

It localises to the secreted. The catalysed reaction is a 1,2-diacyl-sn-glycero-3-phosphocholine + H2O = a 1-acyl-sn-glycero-3-phosphocholine + a fatty acid + H(+). Functionally, PLA2 catalyzes the calcium-dependent hydrolysis of the 2-acyl groups in 3-sn-phosphoglycerides. This chain is Basic phospholipase A2 1, found in Naja melanoleuca (Forest cobra).